A 532-amino-acid chain; its full sequence is Nitrogenase molybdenum-iron protein alpha chain (532 aa).

Residues cysteine 62, cysteine 88, and cysteine 153 each coordinate [8Fe-7S] cluster. 2 residues coordinate [7Fe-Mo-9S-C-homocitryl] cluster: cysteine 271 and histidine 489.

This sequence belongs to the NifD/NifK/NifE/NifN family. In terms of assembly, tetramer of two alpha and two beta chains. Forms complex with the iron protein (nitrogenase component 2). The cofactor is [8Fe-7S] cluster. It depends on [7Fe-Mo-9S-C-homocitryl] cluster as a cofactor.

The enzyme catalyses N2 + 8 reduced [2Fe-2S]-[ferredoxin] + 16 ATP + 16 H2O = H2 + 8 oxidized [2Fe-2S]-[ferredoxin] + 2 NH4(+) + 16 ADP + 16 phosphate + 6 H(+). Functionally, this molybdenum-iron protein is part of the nitrogenase complex that catalyzes the key enzymatic reactions in nitrogen fixation. This Methanosarcina barkeri protein is Nitrogenase molybdenum-iron protein alpha chain (nifD2).